The sequence spans 43 residues: Defensin, isoforms B and C (43 aa).

3 disulfides stabilise this stretch: C3–C34, C20–C40, and C24–C42.

It belongs to the invertebrate defensin family. Type 1 subfamily.

It localises to the secreted. In terms of biological role, involved in anti Gram-positive activity of immune hemolymph of Z.atratus. The sequence is that of Defensin, isoforms B and C from Zophobas atratus (Giant mealworm beetle).